Reading from the N-terminus, the 159-residue chain is Ribosomal RNA large subunit methyltransferase H (159 aa).

S-adenosyl-L-methionine-binding positions include L76, G108, and 127 to 132; that span reads LSKMTF.

It belongs to the RNA methyltransferase RlmH family. As to quaternary structure, homodimer.

The protein localises to the cytoplasm. The catalysed reaction is pseudouridine(1915) in 23S rRNA + S-adenosyl-L-methionine = N(3)-methylpseudouridine(1915) in 23S rRNA + S-adenosyl-L-homocysteine + H(+). Its function is as follows. Specifically methylates the pseudouridine at position 1915 (m3Psi1915) in 23S rRNA. In Ureaplasma urealyticum serovar 10 (strain ATCC 33699 / Western), this protein is Ribosomal RNA large subunit methyltransferase H.